The primary structure comprises 84 residues: ICP35 (84 aa).

The chain is ICP35 from Crustacea (WSSV).